A 252-amino-acid chain; its full sequence is NLP effector protein Pc118356 (252 aa).

An N-terminal signal peptide occupies residues 1 to 17 (MALTVLAATALTALIMG). N-linked (GlcNAc...) asparagine glycans are attached at residues Asn-20 and Asn-67. A Hepta-peptide GHRHDWE motif motif is present at residues 121–127 (QDRHFWE). Residue Asn-166 is glycosylated (N-linked (GlcNAc...) asparagine).

This sequence belongs to the Necrosis inducing protein (NPP1) family.

It localises to the secreted. Functionally, secreted effector that contributes strongly to virulence during infection by P.capsici. The polypeptide is NLP effector protein Pc118356 (Phytophthora capsici).